We begin with the raw amino-acid sequence, 600 residues long: Proline--tRNA ligase (600 aa).

It belongs to the class-II aminoacyl-tRNA synthetase family. ProS type 1 subfamily. As to quaternary structure, homodimer.

It localises to the cytoplasm. The enzyme catalyses tRNA(Pro) + L-proline + ATP = L-prolyl-tRNA(Pro) + AMP + diphosphate. Its function is as follows. Catalyzes the attachment of proline to tRNA(Pro) in a two-step reaction: proline is first activated by ATP to form Pro-AMP and then transferred to the acceptor end of tRNA(Pro). As ProRS can inadvertently accommodate and process non-cognate amino acids such as alanine and cysteine, to avoid such errors it has two additional distinct editing activities against alanine. One activity is designated as 'pretransfer' editing and involves the tRNA(Pro)-independent hydrolysis of activated Ala-AMP. The other activity is designated 'posttransfer' editing and involves deacylation of mischarged Ala-tRNA(Pro). The misacylated Cys-tRNA(Pro) is not edited by ProRS. In Prochlorococcus marinus (strain MIT 9515), this protein is Proline--tRNA ligase.